The sequence spans 103 residues: Pilin (103 aa).

Residues 1–30 (MYRFACRTLMLAACILATGVAGLGVGAQSA) form the signal peptide. Residues 61–76 (HDDFHRDSDGPDHSRD) are compositionally biased toward basic and acidic residues. The tract at residues 61 to 103 (HDDFHRDSDGPDHSRDYPGPILEGPVLDDPGAAPPPPAAGGGA) is disordered. The segment covering 92–103 (AAPPPPAAGGGA) has biased composition (pro residues).

Belongs to the mycobacterial pilin family. As to quaternary structure, forms a homomer composed of subunits assembled in a large structure.

Its subcellular location is the fimbrium. In terms of biological role, structural subunit of pili, which are thin, flexible, coiled-coil, aggregative fibers. Mediates adhesion to the extracellular matrix, an event that would facilitate direct interaction with the host epithelium during infection in the lung or other tissues. The polypeptide is Pilin (mtp) (Mycobacterium bovis (strain ATCC BAA-935 / AF2122/97)).